A 259-amino-acid chain; its full sequence is Adenosylcobinamide-GDP ribazoletransferase (259 aa).

Helical transmembrane passes span 27 to 47 (ITFL…ILYI), 51 to 71 (FSHL…NGLN), 100 to 120 (VGAG…LSLA), 124 to 144 (LYIG…SMMI), 175 to 195 (FLAI…VIVA), and 219 to 239 (VIGF…IIIA).

Belongs to the CobS family. Mg(2+) serves as cofactor.

It is found in the cell membrane. The enzyme catalyses alpha-ribazole + adenosylcob(III)inamide-GDP = adenosylcob(III)alamin + GMP + H(+). It catalyses the reaction alpha-ribazole 5'-phosphate + adenosylcob(III)inamide-GDP = adenosylcob(III)alamin 5'-phosphate + GMP + H(+). It participates in cofactor biosynthesis; adenosylcobalamin biosynthesis; adenosylcobalamin from cob(II)yrinate a,c-diamide: step 7/7. Its function is as follows. Joins adenosylcobinamide-GDP and alpha-ribazole to generate adenosylcobalamin (Ado-cobalamin). Also synthesizes adenosylcobalamin 5'-phosphate from adenosylcobinamide-GDP and alpha-ribazole 5'-phosphate. This is Adenosylcobinamide-GDP ribazoletransferase from Thermoplasma volcanium (strain ATCC 51530 / DSM 4299 / JCM 9571 / NBRC 15438 / GSS1).